Reading from the N-terminus, the 277-residue chain is Thiazole synthase (277 aa).

Lys119 acts as the Schiff-base intermediate with DXP in catalysis. Residues Gly180, 206-207 (AG), and 228-229 (NT) each bind 1-deoxy-D-xylulose 5-phosphate.

The protein belongs to the ThiG family. As to quaternary structure, homotetramer. Forms heterodimers with either ThiH or ThiS.

Its subcellular location is the plastid. The protein localises to the chloroplast. The enzyme catalyses [ThiS sulfur-carrier protein]-C-terminal-Gly-aminoethanethioate + 2-iminoacetate + 1-deoxy-D-xylulose 5-phosphate = [ThiS sulfur-carrier protein]-C-terminal Gly-Gly + 2-[(2R,5Z)-2-carboxy-4-methylthiazol-5(2H)-ylidene]ethyl phosphate + 2 H2O + H(+). It participates in cofactor biosynthesis; thiamine diphosphate biosynthesis. Its function is as follows. Catalyzes the rearrangement of 1-deoxy-D-xylulose 5-phosphate (DXP) to produce the thiazole phosphate moiety of thiamine. Sulfur is provided by the thiocarboxylate moiety of the carrier protein ThiS. In vitro, sulfur can be provided by H(2)S. The polypeptide is Thiazole synthase (Porphyra purpurea (Red seaweed)).